A 378-amino-acid chain; its full sequence is Nucleosome assembly protein 1;1 (378 aa).

Residues 33–87 (VNALKDKLQSLAGQHTDVLEALSPNVRKRVEYLREIQGQHDEIELKFFEERAALE) adopt a coiled-coil conformation. Residues 54–69 (LSPNVRKRVEYLREIQ) carry the Nuclear export signal motif. Residues 230–235 (KKKPKK) carry the Nuclear localization signal motif. Residues 306–378 (AVQAEDFDDM…ADQPADCKQQ (73 aa)) are disordered. Acidic residues predominate over residues 308–344 (QAEDFDDMEDDEEDDEDDDEDEEEEEEDEDEDEDDEE). The Nuclear localization signal motif lies at 348–352 (KPKKK). Residues 356–378 (KPKLPSKGGAQGGADQPADCKQQ) show a composition bias toward low complexity. C375 is subject to Cysteine methyl ester. C375 carries the S-farnesyl cysteine lipid modification. A propeptide spans 376-378 (KQQ) (removed in mature form).

Belongs to the nucleosome assembly protein (NAP) family.

It is found in the nucleus. It localises to the cytoplasm. Its function is as follows. May modulate chromatin structure by regulation of nucleosome assembly/disassembly. This Oryza sativa subsp. japonica (Rice) protein is Nucleosome assembly protein 1;1 (NAP1;1).